Here is a 330-residue protein sequence, read N- to C-terminus: Phosphatidylglycerol--prolipoprotein diacylglyceryl transferase (330 aa).

The next 3 membrane-spanning stretches (helical) occupy residues 22–42, 57–77, and 97–117; these read LPIR…LVVG, YDIA…YHLA, and IWDG…GAWL. R145 is an a 1,2-diacyl-sn-glycero-3-phospho-(1'-sn-glycerol) binding site. 2 helical membrane passes run 193–213 and 257–277; these read VVQP…FALI and INSF…ILAP.

This sequence belongs to the Lgt family.

The protein resides in the cell membrane. It catalyses the reaction L-cysteinyl-[prolipoprotein] + a 1,2-diacyl-sn-glycero-3-phospho-(1'-sn-glycerol) = an S-1,2-diacyl-sn-glyceryl-L-cysteinyl-[prolipoprotein] + sn-glycerol 1-phosphate + H(+). It functions in the pathway protein modification; lipoprotein biosynthesis (diacylglyceryl transfer). Catalyzes the transfer of the diacylglyceryl group from phosphatidylglycerol to the sulfhydryl group of the N-terminal cysteine of a prolipoprotein, the first step in the formation of mature lipoproteins. This Mycobacterium leprae (strain Br4923) protein is Phosphatidylglycerol--prolipoprotein diacylglyceryl transferase.